The chain runs to 383 residues: Lipid-A-disaccharide synthase (383 aa).

The protein belongs to the LpxB family.

It carries out the reaction a lipid X + a UDP-2-N,3-O-bis[(3R)-3-hydroxyacyl]-alpha-D-glucosamine = a lipid A disaccharide + UDP + H(+). It functions in the pathway bacterial outer membrane biogenesis; LPS lipid A biosynthesis. Functionally, condensation of UDP-2,3-diacylglucosamine and 2,3-diacylglucosamine-1-phosphate to form lipid A disaccharide, a precursor of lipid A, a phosphorylated glycolipid that anchors the lipopolysaccharide to the outer membrane of the cell. The polypeptide is Lipid-A-disaccharide synthase (Anaeromyxobacter sp. (strain K)).